The sequence spans 695 residues: Threonine--tRNA ligase (695 aa).

The TGS domain occupies 1 to 76; sequence MPRIPSPPQA…TTTDVVEPVT (76 aa). The catalytic stretch occupies residues 279 to 585; it reads DHRKLGVELD…LLEHHAGAFP (307 aa). The Zn(2+) site is built by Cys-384, His-435, and His-562.

The protein belongs to the class-II aminoacyl-tRNA synthetase family. Homodimer. Zn(2+) serves as cofactor.

The protein resides in the cytoplasm. It catalyses the reaction tRNA(Thr) + L-threonine + ATP = L-threonyl-tRNA(Thr) + AMP + diphosphate + H(+). Its function is as follows. Catalyzes the attachment of threonine to tRNA(Thr) in a two-step reaction: L-threonine is first activated by ATP to form Thr-AMP and then transferred to the acceptor end of tRNA(Thr). Also edits incorrectly charged L-seryl-tRNA(Thr). The polypeptide is Threonine--tRNA ligase (Leifsonia xyli subsp. xyli (strain CTCB07)).